The following is a 202-amino-acid chain: Glycerol-3-phosphate acyltransferase (202 aa).

A run of 4 helical transmembrane segments spans residues alanine 11 to leucine 31, proline 87 to phenylalanine 107, phenylalanine 116 to leucine 136, and valine 158 to leucine 178.

It belongs to the PlsY family. In terms of assembly, probably interacts with PlsX.

Its subcellular location is the cell inner membrane. The catalysed reaction is an acyl phosphate + sn-glycerol 3-phosphate = a 1-acyl-sn-glycero-3-phosphate + phosphate. It functions in the pathway lipid metabolism; phospholipid metabolism. In terms of biological role, catalyzes the transfer of an acyl group from acyl-phosphate (acyl-PO(4)) to glycerol-3-phosphate (G3P) to form lysophosphatidic acid (LPA). This enzyme utilizes acyl-phosphate as fatty acyl donor, but not acyl-CoA or acyl-ACP. This chain is Glycerol-3-phosphate acyltransferase, found in Methylorubrum populi (strain ATCC BAA-705 / NCIMB 13946 / BJ001) (Methylobacterium populi).